The chain runs to 237 residues: 1-(5-phosphoribosyl)-5-[(5-phosphoribosylamino)methylideneamino] imidazole-4-carboxamide isomerase (237 aa).

The Proton acceptor role is filled by D8. D129 functions as the Proton donor in the catalytic mechanism.

It belongs to the HisA/HisF family.

The protein resides in the cytoplasm. It carries out the reaction 1-(5-phospho-beta-D-ribosyl)-5-[(5-phospho-beta-D-ribosylamino)methylideneamino]imidazole-4-carboxamide = 5-[(5-phospho-1-deoxy-D-ribulos-1-ylimino)methylamino]-1-(5-phospho-beta-D-ribosyl)imidazole-4-carboxamide. It functions in the pathway amino-acid biosynthesis; L-histidine biosynthesis; L-histidine from 5-phospho-alpha-D-ribose 1-diphosphate: step 4/9. The polypeptide is 1-(5-phosphoribosyl)-5-[(5-phosphoribosylamino)methylideneamino] imidazole-4-carboxamide isomerase (Clostridium botulinum (strain Alaska E43 / Type E3)).